Here is a 228-residue protein sequence, read N- to C-terminus: L-ribulose-5-phosphate 4-epimerase UlaF (228 aa).

Residues 26 to 27 (GN), 43 to 44 (SG), and 72 to 73 (SS) each bind substrate. Zn(2+) contacts are provided by Asp74, His93, and His95. The active-site Proton donor/acceptor is Asp118. Residue His167 coordinates Zn(2+). Catalysis depends on Tyr225, which acts as the Proton donor/acceptor.

The protein belongs to the aldolase class II family. AraD/FucA subfamily. The cofactor is Zn(2+).

It carries out the reaction L-ribulose 5-phosphate = D-xylulose 5-phosphate. It functions in the pathway cofactor degradation; L-ascorbate degradation; D-xylulose 5-phosphate from L-ascorbate: step 4/4. In terms of biological role, catalyzes the isomerization of L-ribulose 5-phosphate to D-xylulose 5-phosphate. Is involved in the anaerobic L-ascorbate utilization. The sequence is that of L-ribulose-5-phosphate 4-epimerase UlaF from Shigella sonnei (strain Ss046).